A 146-amino-acid chain; its full sequence is MKHVDIFTDGACSGNPGPGGWGAVLRYGETEKELSGGEADTTNNRMELLAAISALNALKSPCEVDLYTDSAYVKDGITKWIFGWKKKGWKTADNKPVKNVELWQALEAAQERHKVTLHWVKGHAGHPENERADELARKGMEPFKRR.

The RNase H type-1 domain occupies 1-141 (MKHVDIFTDG…ADELARKGME (141 aa)). Asp-9, Glu-47, Asp-69, and Asp-133 together coordinate Mg(2+). A disordered region spans residues 123–146 (HAGHPENERADELARKGMEPFKRR). Over residues 125 to 146 (GHPENERADELARKGMEPFKRR) the composition is skewed to basic and acidic residues.

The protein belongs to the RNase H family. Monomer. Mg(2+) serves as cofactor.

It is found in the cytoplasm. It carries out the reaction Endonucleolytic cleavage to 5'-phosphomonoester.. In terms of biological role, endonuclease that specifically degrades the RNA of RNA-DNA hybrids. The chain is Ribonuclease H from Agrobacterium fabrum (strain C58 / ATCC 33970) (Agrobacterium tumefaciens (strain C58)).